The following is a 709-amino-acid chain: MSLAQKINRVVAPFEVISPYQPSGDQPKAIAELAERVEAGEKDVVLMGATGTGKSATTAWLVERLQRPTLVMVQNKTLAAQLANEFRELLPNNAVEYFVSYYDYYQPEAYVPQTDTFIEKDSSINEEVERLRHSATNALLTRRDVIVVATVSCIYGLGTPEEYIEQMVTLRRGAEMDRDVLLRRFVQMQYVRNDVDFHRGTFRVRGDTVEIIPMYEELAVRIEFFGDEIESIQTLHPLTGQVVREEEEMYIFPASHYVAGDERMGRAITTIEDELRERLQELESQDKLLEAQRLRMRTTYDLEMMQQMGYCNGIENYSRHIDGRPAGSAPHCLLDYFPDDFLLVVDESHVTIPQIGAMYEGDMSRKRTLVEHGFRLPSAMDNRPLKWDEFLERIGQTVYLSATPGAYELGQADGYVEQIIRPTGLVDPQVVVKPTEGQIDDLLEQIRVRTAKDERVLVTTLTKRMAEDLTDYLLEAGVKVEYLHSDVDTLRRVELLRELRKGTFDVLVGINLLREGLDLPEVSLVAILDADKEGFLRSTTSLIQTIGRAARNVSGEVHMYAGNVTDSMRRAIEETERRRAVQIAYNEEHGIDPQPLRKRIADITDQLAREDADTADFLKGMGGVKSGFDFGMGHRGLSSLDRAPATGEGAAAPAVDPASLPAKDLADLIEQMSQQMHQAAADLQFELAARLRDEVGELKKELRQMKREQ.

The region spanning 35-416 (ERVEAGEKDV…YELGQADGYV (382 aa)) is the Helicase ATP-binding domain. 48–55 (GATGTGKS) is a binding site for ATP. Residues 101–124 (YYDYYQPEAYVPQTDTFIEKDSSI) carry the Beta-hairpin motif. A Helicase C-terminal domain is found at 438–604 (QIDDLLEQIR…PLRKRIADIT (167 aa)). One can recognise a UVR domain in the interval 666 to 701 (ADLIEQMSQQMHQAAADLQFELAARLRDEVGELKKE).

It belongs to the UvrB family. Forms a heterotetramer with UvrA during the search for lesions. Interacts with UvrC in an incision complex.

It localises to the cytoplasm. In terms of biological role, the UvrABC repair system catalyzes the recognition and processing of DNA lesions. A damage recognition complex composed of 2 UvrA and 2 UvrB subunits scans DNA for abnormalities. Upon binding of the UvrA(2)B(2) complex to a putative damaged site, the DNA wraps around one UvrB monomer. DNA wrap is dependent on ATP binding by UvrB and probably causes local melting of the DNA helix, facilitating insertion of UvrB beta-hairpin between the DNA strands. Then UvrB probes one DNA strand for the presence of a lesion. If a lesion is found the UvrA subunits dissociate and the UvrB-DNA preincision complex is formed. This complex is subsequently bound by UvrC and the second UvrB is released. If no lesion is found, the DNA wraps around the other UvrB subunit that will check the other stand for damage. The protein is UvrABC system protein B of Micrococcus luteus (strain ATCC 4698 / DSM 20030 / JCM 1464 / CCM 169 / CCUG 5858 / IAM 1056 / NBRC 3333 / NCIMB 9278 / NCTC 2665 / VKM Ac-2230) (Micrococcus lysodeikticus).